A 205-amino-acid polypeptide reads, in one-letter code: ATP phosphoribosyltransferase (205 aa).

The protein belongs to the ATP phosphoribosyltransferase family. Short subfamily. In terms of assembly, heteromultimer composed of HisG and HisZ subunits.

It is found in the cytoplasm. The catalysed reaction is 1-(5-phospho-beta-D-ribosyl)-ATP + diphosphate = 5-phospho-alpha-D-ribose 1-diphosphate + ATP. Its pathway is amino-acid biosynthesis; L-histidine biosynthesis; L-histidine from 5-phospho-alpha-D-ribose 1-diphosphate: step 1/9. Functionally, catalyzes the condensation of ATP and 5-phosphoribose 1-diphosphate to form N'-(5'-phosphoribosyl)-ATP (PR-ATP). Has a crucial role in the pathway because the rate of histidine biosynthesis seems to be controlled primarily by regulation of HisG enzymatic activity. The sequence is that of ATP phosphoribosyltransferase from Leptospira borgpetersenii serovar Hardjo-bovis (strain JB197).